Here is a 344-residue protein sequence, read N- to C-terminus: Ubiquitin-associated domain-containing protein 2 (344 aa).

An N-terminal signal peptide occupies residues 1–34 (MFTSTGSNGLYKAPLSKSLLLVPSAISILLTLLF). Over 35–91 (QHYQKFFAYNLQAIKEDFQIWRLVCGRVICLDLKDTFCSSLLIYNFRIFERRYGSRK) the chain is Extracellular. A helical membrane pass occupies residues 92 to 111 (FSSFLLGAWTLSALFDLLLV). Residues 112–123 (EAAQYVFGITIN) are Cytoplasmic-facing. The chain crosses the membrane as a helical span at residues 124 to 142 (SLPSGFLGPVFALFVPFYC). Residues 143 to 162 (SIPRVQVTQVLGYFSITNKT) are Extracellular-facing. Asn160 is a glycosylation site (N-linked (GlcNAc...) asparagine). Residues 163 to 183 (LVYILGLQLLTSGSYIWILAL) form a helical membrane-spanning segment. The Cytoplasmic segment spans residues 184 to 344 (SGLISGICYN…NVATNFLLQH (161 aa)). The tract at residues 284-307 (RHNENYQDHHPSDQDTPPPTEVSE) is disordered. Residues 286-296 (NENYQDHHPSD) show a composition bias toward basic and acidic residues. Residues 304 to 344 (EVSEEQVARLMEMGFSRGDALEALRASNNDLNVATNFLLQH) form the UBA domain.

It is found in the endoplasmic reticulum membrane. Restricts trafficking of FAF2 from the endoplasmic reticulum to lipid droplets. May negatively regulate the canonical Wnt signaling pathway in the lymphocytes. The protein is Ubiquitin-associated domain-containing protein 2 (UBAC2) of Gallus gallus (Chicken).